The primary structure comprises 172 residues: Protein GrpE (172 aa).

The span at 1–11 (MSEENNSQNSN) shows a compositional bias: low complexity. A disordered region spans residues 1 to 22 (MSEENNSQNSNPPNPENGEIAS).

Belongs to the GrpE family. In terms of assembly, homodimer.

Its subcellular location is the cytoplasm. Participates actively in the response to hyperosmotic and heat shock by preventing the aggregation of stress-denatured proteins, in association with DnaK and GrpE. It is the nucleotide exchange factor for DnaK and may function as a thermosensor. Unfolded proteins bind initially to DnaJ; upon interaction with the DnaJ-bound protein, DnaK hydrolyzes its bound ATP, resulting in the formation of a stable complex. GrpE releases ADP from DnaK; ATP binding to DnaK triggers the release of the substrate protein, thus completing the reaction cycle. Several rounds of ATP-dependent interactions between DnaJ, DnaK and GrpE are required for fully efficient folding. The chain is Protein GrpE from Bdellovibrio bacteriovorus (strain ATCC 15356 / DSM 50701 / NCIMB 9529 / HD100).